Consider the following 238-residue polypeptide: Transcriptional activator protein AnoR (238 aa).

The HTH luxR-type domain occupies 170 to 236; the sequence is EFSQFNLYLT…SAAIRAVMLG (67 aa). Residues 195-214 constitute a DNA-binding region (H-T-H motif); that stretch reads SAEIAQIIGVTERTVNFHLC.

Belongs to the autoinducer-regulated transcriptional regulatory protein family.

Functionally, positively regulates the expression of anoI. Required for biofilm formation and motility. Probably part of a quorum-sensing system with AnoI. The polypeptide is Transcriptional activator protein AnoR (Acinetobacter nosocomialis).